Consider the following 284-residue polypeptide: Methylglyoxal reductase YeaE (284 aa).

The protein belongs to the aldo/keto reductase family.

It catalyses the reaction hydroxyacetone + NADP(+) = methylglyoxal + NADPH + H(+). The catalysed reaction is a primary alcohol + NADP(+) = an aldehyde + NADPH + H(+). Functionally, aldo-keto reductase that contributes to cellular methylglyoxal detoxification by catalyzing the NADPH-dependent conversion of methylglyoxal to acetol. It also exhibits activity with glyoxal and probably plays a significant role in detoxification of glyoxal in vivo. Can also use aromatic aldehydes such as 4-nitrobenzaldehyde, 3-nitrobenzaldehyde and benzaldehyde, and phenylglyoxal. This chain is Methylglyoxal reductase YeaE (yeaE), found in Escherichia coli (strain K12).